Consider the following 102-residue polypeptide: Glutaredoxin 1 (102 aa).

The Glutaredoxin domain maps to 1-96; the sequence is MNKAILHTII…KLLENQPKTT (96 aa). Residues Cys17 and Cys20 are joined by a disulfide bond.

The protein belongs to the glutaredoxin family. As to quaternary structure, monomer.

Its subcellular location is the cytoplasm. Functionally, has a glutathione-disulfide oxidoreductase activity in the presence of NADPH and glutathione reductase. Reduces low molecular weight disulfides and proteins. In Rickettsia conorii (strain ATCC VR-613 / Malish 7), this protein is Glutaredoxin 1 (grxC1).